Consider the following 399-residue polypeptide: MAKEKFSRNKPHVNIGTIGHVDHGKTTLTAAISAVLSRKGLAEMKDYDNIDNAPEEKERGITIATSHIEYETEKRHYAHVDCPGHADYVKNMITGAAQMDGAILVVSAADGPMPQTREHILLSRQVGVPYIVVFMNKADMVDDAELLELVEMEIRELLNEYNFPGDDTPIISGSALKALEEAKAGVDGEWSAKVLELMDKVDEYIPTPVRATDKDFLMPIEDVFSISGRGTVVTGRIEKGVVKVGDTIEIVGIKPTQTTTVTGVEMFRKEMEQGEAGDNVGVLLRGTKKEDVERGMVLCKPKSITPHTKFEGEVYILTKEEGGRHTPFFNNYRPQFYVRTTDVTGSITLPEGTEMVMPGDNVRISVELIAPVALEEGTRFAIREGGRTVGSGVVSKILA.

The tr-type G domain occupies 10-209 (KPHVNIGTIG…KVDEYIPTPV (200 aa)). Positions 19 to 26 (GHVDHGKT) are G1. Residue 19-26 (GHVDHGKT) coordinates GTP. Position 26 (Thr26) interacts with Mg(2+). Residues 60 to 64 (GITIA) are G2. The G3 stretch occupies residues 81–84 (DCPG). GTP contacts are provided by residues 81 to 85 (DCPGH) and 136 to 139 (NKAD). The tract at residues 136–139 (NKAD) is G4. The tract at residues 174 to 176 (SAL) is G5.

Belongs to the TRAFAC class translation factor GTPase superfamily. Classic translation factor GTPase family. EF-Tu/EF-1A subfamily. Monomer.

Its subcellular location is the cytoplasm. The enzyme catalyses GTP + H2O = GDP + phosphate + H(+). Its function is as follows. GTP hydrolase that promotes the GTP-dependent binding of aminoacyl-tRNA to the A-site of ribosomes during protein biosynthesis. The protein is Elongation factor Tu of Campylobacter curvus (strain 525.92).